Consider the following 103-residue polypeptide: Pyrimidine/purine nucleoside phosphorylase (103 aa).

It belongs to the nucleoside phosphorylase PpnP family.

It catalyses the reaction a purine D-ribonucleoside + phosphate = a purine nucleobase + alpha-D-ribose 1-phosphate. The enzyme catalyses adenosine + phosphate = alpha-D-ribose 1-phosphate + adenine. It carries out the reaction cytidine + phosphate = cytosine + alpha-D-ribose 1-phosphate. The catalysed reaction is guanosine + phosphate = alpha-D-ribose 1-phosphate + guanine. It catalyses the reaction inosine + phosphate = alpha-D-ribose 1-phosphate + hypoxanthine. The enzyme catalyses thymidine + phosphate = 2-deoxy-alpha-D-ribose 1-phosphate + thymine. It carries out the reaction uridine + phosphate = alpha-D-ribose 1-phosphate + uracil. The catalysed reaction is xanthosine + phosphate = alpha-D-ribose 1-phosphate + xanthine. In terms of biological role, catalyzes the phosphorolysis of diverse nucleosides, yielding D-ribose 1-phosphate and the respective free bases. Can use uridine, adenosine, guanosine, cytidine, thymidine, inosine and xanthosine as substrates. Also catalyzes the reverse reactions. In Cupriavidus metallidurans (strain ATCC 43123 / DSM 2839 / NBRC 102507 / CH34) (Ralstonia metallidurans), this protein is Pyrimidine/purine nucleoside phosphorylase.